Consider the following 2948-residue polypeptide: Transforming acidic coiled-coil-containing protein 2 (2948 aa).

Positions 1–30 are enriched in polar residues; sequence MGNENSTSDNQRTLSAQTPRSAQPPGNSQN. Disordered regions lie at residues 1 to 304, 314 to 333, 392 to 453, 465 to 785, 825 to 964, 985 to 1050, 1062 to 1154, 1243 to 1274, 1296 to 1400, 1427 to 1463, 1493 to 1661, 1675 to 1705, 1741 to 1878, 1907 to 2035, and 2052 to 2460; these read MGNE…TDDL, RSNSGAAPEAEVNAASQESC, AAGG…MPVS, LVGL…PQGE, SSEK…VSPP, CTGQ…QPDS, ALAP…GEAT, AAQRGAEDSGVKAVSSADPRAPGESPCPVGEP, QPGA…EQIA, PGEKAGAGRSAVGKDLTRPLGPEKLLDGPPGVDVTLL, ASDK…GERR, LGNQSTPAPPTGEVADTPLEPGKVAGAAGEA, VLPG…ESPT, HAGL…SSGT, and LEPR…ETPP. The span at 174–184 shows a compositional bias: basic and acidic residues; that stretch reads GRERQPKEEGQ. Residues serine 197, serine 201, and serine 269 each carry the phosphoserine modification. Valine 325 is modified (phosphothreonine). Serine 493 bears the Phosphoserine mark. Over residues 496–507 the composition is skewed to basic and acidic residues; it reads ERGEHLNTEQSH. Serine 561, serine 571, and serine 575 each carry phosphoserine. A compositionally biased stretch (basic and acidic residues) spans 604 to 629; sequence SKRDPEVGKDELSKPSSDAESRDHPS. Phosphoserine is present on serine 758. The segment covering 911–926 has biased composition (low complexity); it reads SDTPTSSPTDMVWESS. Residue serine 962 is modified to Phosphoserine. Polar residues predominate over residues 985-996; that stretch reads CTGQGPNKSQQA. A Phosphoserine modification is found at serine 1025. Residues serine 1267 and serine 1313 each carry the phosphoserine modification. Low complexity predominate over residues 1348 to 1357; that stretch reads ATAPGAGAKA. The span at 1383 to 1400 shows a compositional bias: polar residues; that stretch reads DPKQGTSGGVDTSSEQIA. Serine 1562 carries the phosphoserine modification. Basic and acidic residues-rich tracts occupy residues 1801 to 1823 and 1834 to 1854; these read DETHDPKLQHLAPEELHTDRESP and PKKDAPRVMDKVTSDETRGAE. Residues 1862 to 1873 show a composition bias toward low complexity; it reads ADDIIQPAAPAD. Residues 1939-1948 are compositionally biased toward basic and acidic residues; that stretch reads PAKDLSRSSD. Residues 1963–1976 show a composition bias toward pro residues; that stretch reads KAPPAPPPPPPEVI. Phosphoserine is present on serine 2072. The segment covering 2074 to 2102 has biased composition (polar residues); that stretch reads DSVPISKSTLSRSLSLQASDFDGASSSGN. Over residues 2114-2124 the composition is skewed to low complexity; it reads STGSSSASSTL. The segment covering 2125–2141 has biased composition (basic residues); the sequence is KRTKKPRPPSLKKKQTT. Residues serine 2161 and serine 2226 each carry the phosphoserine modification. Threonine 2246 carries the phosphothreonine modification. At serine 2256 the chain carries Phosphoserine. Basic and acidic residues predominate over residues 2265–2275; sequence LEFDYSEDKSS. The segment covering 2288-2305 has biased composition (basic residues); that stretch reads KIGKKPVAKMPLRRPKMK. The region spanning 2315-2403 is the SPAZ domain; it reads PASPPRSPAE…SPASFEIPAS (89 aa). A phosphoserine mark is found at serine 2317, serine 2321, serine 2359, serine 2389, serine 2392, serine 2394, and serine 2403. The segment covering 2348 to 2368 has biased composition (polar residues); sequence NPFSSTSKMQESPKLPQQSYN. The span at 2382-2395 shows a compositional bias: low complexity; the sequence is KTSSKTPSSPSKSP. Phosphothreonine occurs at positions 2430, 2451, 2455, and 2458. 2 positions are modified to phosphoserine: serine 2512 and serine 2534. A Phosphothreonine modification is found at threonine 2553. The tract at residues 2555–2577 is disordered; the sequence is QESPVKSSPVRMSESPTPCSGSS. A phosphoserine mark is found at serine 2557 and serine 2569. The segment covering 2568 to 2577 has biased composition (polar residues); the sequence is ESPTPCSGSS. Position 2625 is a phosphothreonine (threonine 2625). 2 coiled-coil regions span residues 2675 to 2703 and 2746 to 2947; these read AQKLQEELEFAIMRIEALKLARQIALASR and DLDS…KMGK.

The protein belongs to the TACC family. As to quaternary structure, interacts with CCDC100/CEP120. Interacts with microtubules. Interacts with YEATS4, GCN5L2 and PCAF. In terms of processing, phosphorylated by TTK; which is required for localization in centrosome. As to expression, strongly expressed in heart, skeletal muscle, brain, prostate, thyroid and trachea.

Its subcellular location is the cytoplasm. It is found in the nucleus. The protein resides in the cytoskeleton. The protein localises to the microtubule organizing center. It localises to the centrosome. Its function is as follows. Plays a role in the microtubule-dependent coupling of the nucleus and the centrosome. Involved in the processes that regulate centrosome-mediated interkinetic nuclear migration (INM) of neural progenitors. May play a role in organizing centrosomal microtubules. May act as a tumor suppressor protein. May represent a tumor progression marker. The protein is Transforming acidic coiled-coil-containing protein 2 (TACC2) of Homo sapiens (Human).